Reading from the N-terminus, the 349-residue chain is S-adenosylmethionine:tRNA ribosyltransferase-isomerase (349 aa).

It belongs to the QueA family. In terms of assembly, monomer.

It localises to the cytoplasm. The catalysed reaction is 7-aminomethyl-7-carbaguanosine(34) in tRNA + S-adenosyl-L-methionine = epoxyqueuosine(34) in tRNA + adenine + L-methionine + 2 H(+). Its pathway is tRNA modification; tRNA-queuosine biosynthesis. Functionally, transfers and isomerizes the ribose moiety from AdoMet to the 7-aminomethyl group of 7-deazaguanine (preQ1-tRNA) to give epoxyqueuosine (oQ-tRNA). This chain is S-adenosylmethionine:tRNA ribosyltransferase-isomerase, found in Ruegeria sp. (strain TM1040) (Silicibacter sp.).